A 409-amino-acid chain; its full sequence is Odorant receptor 35a (409 aa).

Residues 1-35 (MVRYVPRFADGQKVKLAWPLAVFRLNHIFWPLDPS) are Cytoplasmic-facing. The helical transmembrane segment at 36 to 56 (TGKWGRYLDKVLAVAMSLVFM) threads the bilayer. Residues 57–64 (QHNDAELR) lie on the Extracellular side of the membrane. The helical transmembrane segment at 65–85 (YLRFEASNRNLDAFLTGMPTY) threads the bilayer. The Cytoplasmic portion of the chain corresponds to 86–139 (LILVEAQFRSLHILLHFEKLQKFLEIFYANIYIDPRKEPEMFRKVDGKMIINRL). A helical membrane pass occupies residues 140–160 (VSAMYGAVISLYLIAPVFSII). Residue N161 is glycosylated (N-linked (GlcNAc...) asparagine). The Extracellular segment spans residues 161 to 177 (NQSKDFLYSMIFPFDSD). Residues 178-198 (PLYIFVPLLLTNVWVGIVIDT) form a helical membrane-spanning segment. Residues 199–273 (MMFGETNLLC…QQLEAQYTVR (75 aa)) lie on the Cytoplasmic side of the membrane. A helical membrane pass occupies residues 274 to 294 (VFIMFAFAAGLLCALSFKAYT). Topologically, residues 295–302 (NPMANYIY) are extracellular. The chain crosses the membrane as a helical span at residues 303 to 323 (AIWFGAKTVELLSLGQIGSDL). Topologically, residues 324–379 (AFTTDSLSTMYYLTHWEQILQYSTNPSENLRLLKLINLAIEMNSKPFYVTGLKYFR) are cytoplasmic. A helical transmembrane segment spans residues 380-400 (VSLQAGLKILQASFSYFTFLT). At 401–409 (SMQRRQMSN) the chain is on the extracellular side.

It belongs to the insect chemoreceptor superfamily. Heteromeric odorant receptor channel (TC 1.A.69) family. Or1a subfamily. In terms of assembly, interacts with Orco. Complexes exist early in the endomembrane system in olfactory sensory neurons (OSNs), coupling these complexes to the conserved ciliary trafficking pathway. Expressed in ac3B olfactory sensory neurons in the antenna.

The protein resides in the cell membrane. Functionally, odorant receptor which mediates acceptance or avoidance behavior, depending on its substrates. The odorant receptor repertoire encodes a large collection of odor stimuli that vary widely in identity, intensity, and duration. Forms a complex with Orco to form odorant-sensing units, providing sensitive and prolonged odorant signaling and calcium permeability. Involved in the behavioral responses to esters. Involved in the behavioral responses to butanol, pentanol, hexanol, octanol, propyl acetate, and butyl acetate. The sequence is that of Odorant receptor 35a (Or35a) from Drosophila melanogaster (Fruit fly).